The following is a 509-amino-acid chain: tRNA (guanine(37)-N(1))-methyltransferase (509 aa).

Residues 1-57 (MVLWILWRPFGFSRRLLKLERHSITESKSLIPLAWTSLTQTLSESPGIFLLGQRKRF) constitute a mitochondrion transit peptide. Residues H289, 327 to 328 (DL), 355 to 356 (DG), and N387 each bind S-adenosyl-L-methionine. Positions 478–509 (TKNPENHEDPPLKRQRTAEAFSDEKTQIASNT) are disordered.

It belongs to the class I-like SAM-binding methyltransferase superfamily. TRM5/TYW2 family. In terms of assembly, monomer.

Its subcellular location is the mitochondrion matrix. The protein localises to the nucleus. It is found in the cytoplasm. The catalysed reaction is guanosine(37) in tRNA + S-adenosyl-L-methionine = N(1)-methylguanosine(37) in tRNA + S-adenosyl-L-homocysteine + H(+). Its function is as follows. Involved in mitochondrial tRNA methylation. Specifically methylates the N1 position of guanosine-37 in various tRNAs. Methylation is not dependent on the nature of the nucleoside 5' of the target nucleoside. This is the first step in the biosynthesis of wybutosine (yW), a modified base adjacent to the anticodon of tRNAs and required for accurate decoding. The polypeptide is tRNA (guanine(37)-N(1))-methyltransferase (Macaca fascicularis (Crab-eating macaque)).